The chain runs to 312 residues: Large ribosomal subunit protein uL10 (312 aa).

The tract at residues 287–312 (AAAAPAAKKEEPKEESDDDMGFGLFD) is disordered.

It belongs to the universal ribosomal protein uL10 family. As to quaternary structure, P0 forms a pentameric complex by interaction with dimers of P1 and P2. Phosphorylated.

Ribosomal protein P0 is the functional equivalent of E.coli protein L10. This Caenorhabditis elegans protein is Large ribosomal subunit protein uL10.